The primary structure comprises 464 residues: Cytochrome P450 85A1 (464 aa).

The chain crosses the membrane as a helical span at residues 2-22; it reads AFFLIFLSSFFGLCIFCTALL. C414 contributes to the heme binding site.

It belongs to the cytochrome P450 family. Heme serves as cofactor. As to expression, expressed in sub-meristematic regions of shoot and root apexes, in zones undergoing lateral root formation, in fruits, and in all flower parts, with a high expression in young flower buds and at the joint in the pedicel.

The protein localises to the membrane. The enzyme catalyses 6-deoxocastasterone + reduced [NADPH--hemoprotein reductase] + O2 = 6alpha-hydroxycastasterone + oxidized [NADPH--hemoprotein reductase] + H2O + H(+). It catalyses the reaction 6alpha-hydroxycastasterone + reduced [NADPH--hemoprotein reductase] + O2 = castasterone + oxidized [NADPH--hemoprotein reductase] + 2 H2O + H(+). The catalysed reaction is 6-deoxocastasterone + 2 reduced [NADPH--hemoprotein reductase] + 2 O2 = castasterone + 2 oxidized [NADPH--hemoprotein reductase] + 3 H2O + 2 H(+). The protein operates within plant hormone biosynthesis; brassinosteroid biosynthesis. Its function is as follows. Catalyzes the C6-oxidation step in brassinosteroids biosynthesis. Converts 6-deoxocastasterone (6-deoxoCS) to castasterone (CS). May also convert 6-deoxoteasterone (6-deoxoTE) to teasterone (TE), 3-dehydro-6-deoxoteasterone (6-deoxo3DT, 6-deoxo3DHT) to 3-dehydroteasterone (3DT, 3-DHT), and 6-deoxotyphasterol (6-deoxoTY) to typhasterol (TY), but not castasterone (CS) to brassinolide (BL). The polypeptide is Cytochrome P450 85A1 (Solanum lycopersicum (Tomato)).